The following is a 249-amino-acid chain: Transcription initiation factor TFIID subunit 9B (249 aa).

The residue at position 1 (Met1) is an N-acetylmethionine. Position 147 is a phosphoserine (Ser147). A disordered region spans residues 148-171; the sequence is AVSSRPTTPPVAPPQAVSGPNKAA. Thr172 carries the phosphothreonine modification. Ser175 carries the post-translational modification Phosphoserine. The span at 224–234 shows a compositional bias: polar residues; that stretch reads VSSQNTATDSN. Positions 224 to 249 are disordered; that stretch reads VSSQNTATDSNPLKRKHDDDDDNDTM.

It belongs to the TAF9 family. Binds TAF5 and TAF6. Component of TFIID and the TATA-binding protein-free TAF complex (TFTC). TFIID is composed of TATA binding protein (TBP) and a number of TBP-associated factors (TAFs). Binds N-terminal domain of p53/TP53 which is essential for transcription.

The protein resides in the nucleus. Essential for cell viability. TAF9 and TAF9B are involved in transcriptional activation as well as repression of distinct but overlapping sets of genes. May have a role in gene regulation associated with apoptosis. TAFs are components of the transcription factor IID (TFIID) complex, the TBP-free TAFII complex (TFTC), the PCAF histone acetylase complex and the STAGA transcription coactivator-HAT complex. TFIID or TFTC are essential for the regulation of RNA polymerase II-mediated transcription. This chain is Transcription initiation factor TFIID subunit 9B (Taf9b), found in Mus musculus (Mouse).